The primary structure comprises 95 residues: Co-chaperonin GroES (95 aa).

This sequence belongs to the GroES chaperonin family. As to quaternary structure, heptamer of 7 subunits arranged in a ring. Interacts with the chaperonin GroEL.

The protein localises to the cytoplasm. Functionally, together with the chaperonin GroEL, plays an essential role in assisting protein folding. The GroEL-GroES system forms a nano-cage that allows encapsulation of the non-native substrate proteins and provides a physical environment optimized to promote and accelerate protein folding. GroES binds to the apical surface of the GroEL ring, thereby capping the opening of the GroEL channel. This chain is Co-chaperonin GroES, found in Francisella tularensis subsp. tularensis (strain FSC 198).